Here is a 189-residue protein sequence, read N- to C-terminus: dCTP deaminase, dUMP-forming (189 aa).

DCTP-binding positions include 101–106, D119, 127–129, Q148, Y162, and Q174; these read KSSLGR and TLE. The Proton donor/acceptor role is filled by E129. Residues 163 to 189 are disordered; the sequence is GSSEAGSKYQGQRGPTPSKAYLNFNRS.

This sequence belongs to the dCTP deaminase family. As to quaternary structure, homotrimer.

It carries out the reaction dCTP + 2 H2O = dUMP + NH4(+) + diphosphate. Its pathway is pyrimidine metabolism; dUMP biosynthesis; dUMP from dCTP: step 1/1. Functionally, bifunctional enzyme that catalyzes both the deamination of dCTP to dUTP and the hydrolysis of dUTP to dUMP without releasing the toxic dUTP intermediate. This chain is dCTP deaminase, dUMP-forming, found in Rhodococcus erythropolis (strain PR4 / NBRC 100887).